The following is a 181-amino-acid chain: Glucose-1-phosphate adenylyltransferase large subunit 2 (181 aa).

It belongs to the bacterial/plant glucose-1-phosphate adenylyltransferase family. As to quaternary structure, heterotetramer. Leaves.

It localises to the plastid. Its subcellular location is the chloroplast. The protein resides in the amyloplast. It catalyses the reaction alpha-D-glucose 1-phosphate + ATP + H(+) = ADP-alpha-D-glucose + diphosphate. Its pathway is glycan biosynthesis; starch biosynthesis. Its activity is regulated as follows. Highly active without 3'phosphoglycerate, and is only slightly affected by the activator 3'phosphoglycerate and inhibitor orthophosphate. In terms of biological role, this protein plays a role in synthesis of starch. It catalyzes the synthesis of the activated glycosyl donor, ADP-glucose from Glc-1-P and ATP. In Hordeum vulgare (Barley), this protein is Glucose-1-phosphate adenylyltransferase large subunit 2.